A 318-amino-acid polypeptide reads, in one-letter code: MILELIIVLVLLVLAFKSLKILRPYEKGVVERLGKYQRTVESGLVVIIPFIEAIKKVDMREQVVDVPPQEVITKDNTVVVVDCVIFYEVVDPFNAVYNVVDFYQAITKLAQTNLRNIIGDLELDQTLTSREMINTQLREVLDEATDKWGTRVVRVEIQRIEPPGDIVEAMSKQMKAERMKRAAILEAEGYKQSEIKRAEGDKQAAILEAEGKAEAIKKVADANKYREIAIAEGQAKAILSVFRAMHEGDPTNDIIALKYLEALEKVADGRATKILLPVEATGILGSIAGISEMLSDPEDKGVSEVETESQPAEKPEKH.

A helical transmembrane segment spans residues 2–22 (ILELIIVLVLLVLAFKSLKIL). A disordered region spans residues 295 to 318 (SDPEDKGVSEVETESQPAEKPEKH).

This sequence belongs to the band 7/mec-2 family.

It is found in the membrane. This is an uncharacterized protein from Methanothermobacter thermautotrophicus (strain ATCC 29096 / DSM 1053 / JCM 10044 / NBRC 100330 / Delta H) (Methanobacterium thermoautotrophicum).